Here is a 254-residue protein sequence, read N- to C-terminus: Urease accessory protein UreF (254 aa).

Residues 1 to 11 are compositionally biased toward basic and acidic residues; sequence MDKGKSVKSTE. The disordered stretch occupies residues 1-25; it reads MDKGKSVKSTEKSVGIPPKTPKTDN.

The protein belongs to the UreF family. In terms of assembly, ureH, UreF and UreG form a complex that acts as a GTP-hydrolysis-dependent molecular chaperone, activating the urease apoprotein by helping to assemble the nickel containing metallocenter of UreC. The UreE protein probably delivers the nickel.

It localises to the cytoplasm. Required for maturation of urease via the functional incorporation of the urease nickel metallocenter. This is Urease accessory protein UreF from Helicobacter pylori (strain P12).